Here is a 214-residue protein sequence, read N- to C-terminus: Phosphoribosylglycinamide formyltransferase (214 aa).

12-14 (GSN) provides a ligand contact to N(1)-(5-phospho-beta-D-ribosyl)glycinamide. (6R)-10-formyltetrahydrofolate is bound by residues 105 to 108 (LLIL) and asparagine 123. The Proton donor role is filled by histidine 125. Residue aspartate 167 coordinates (6R)-10-formyltetrahydrofolate. Glutamate 197 is a binding site for N(1)-(5-phospho-beta-D-ribosyl)glycinamide.

Belongs to the GART family.

It catalyses the reaction N(1)-(5-phospho-beta-D-ribosyl)glycinamide + (6R)-10-formyltetrahydrofolate = N(2)-formyl-N(1)-(5-phospho-beta-D-ribosyl)glycinamide + (6S)-5,6,7,8-tetrahydrofolate + H(+). The protein operates within purine metabolism; IMP biosynthesis via de novo pathway; N(2)-formyl-N(1)-(5-phospho-D-ribosyl)glycinamide from N(1)-(5-phospho-D-ribosyl)glycinamide (10-formyl THF route): step 1/1. This Saccharomyces cerevisiae (strain ATCC 204508 / S288c) (Baker's yeast) protein is Phosphoribosylglycinamide formyltransferase.